The chain runs to 126 residues: Large ribosomal subunit protein bL20 (126 aa).

Belongs to the bacterial ribosomal protein bL20 family.

Its function is as follows. Binds directly to 23S ribosomal RNA and is necessary for the in vitro assembly process of the 50S ribosomal subunit. It is not involved in the protein synthesizing functions of that subunit. The protein is Large ribosomal subunit protein bL20 of Frankia casuarinae (strain DSM 45818 / CECT 9043 / HFP020203 / CcI3).